Reading from the N-terminus, the 375-residue chain is Putative prophage phiRv2 integrase (375 aa).

The 79-residue stretch at 75 to 153 folds into the Core-binding (CB) domain; the sequence is APFGEYAEGW…LLRAIMQTAL (79 aa). The 190-residue stretch at 175 to 364 folds into the Tyr recombinase domain; sequence HKIRPATLDE…AKGRDREIAA (190 aa). Residues arginine 209, histidine 316, arginine 319, and histidine 342 contribute to the active site. The active-site O-(3'-phospho-DNA)-tyrosine intermediate is tyrosine 351.

It belongs to the 'phage' integrase family.

Its function is as follows. Integrase is necessary for integration of the phage into the host genome by site-specific recombination. In conjunction with excisionase, integrase is also necessary for excision of the prophage from the host genome. The sequence is that of Putative prophage phiRv2 integrase from Mycobacterium tuberculosis (strain CDC 1551 / Oshkosh).